A 596-amino-acid chain; its full sequence is Choline dehydrogenase, mitochondrial (596 aa).

Residues M1–A34 constitute a mitochondrion transit peptide. T44 to E73 contacts FAD. K438 is modified (N6-succinyllysine). N6-acetyllysine; alternate is present on residues K486 and K498. K486 and K498 each carry N6-succinyllysine; alternate. The active-site Proton acceptor is H513. K582 carries the N6-acetyllysine modification.

Belongs to the GMC oxidoreductase family. It depends on FAD as a cofactor. In terms of processing, acetylation of Lys-498 is observed in liver mitochondria from fasted mice but not from fed mice.

It localises to the mitochondrion inner membrane. It carries out the reaction choline + A = betaine aldehyde + AH2. The protein operates within amine and polyamine biosynthesis; betaine biosynthesis via choline pathway; betaine aldehyde from choline (cytochrome c reductase route): step 1/1. This chain is Choline dehydrogenase, mitochondrial (Chdh), found in Mus musculus (Mouse).